The chain runs to 297 residues: UDP-3-O-acyl-N-acetylglucosamine deacetylase (297 aa).

Residues histidine 79, histidine 238, and aspartate 242 each coordinate Zn(2+). The active-site Proton donor is the histidine 265.

This sequence belongs to the LpxC family. The cofactor is Zn(2+).

It carries out the reaction a UDP-3-O-[(3R)-3-hydroxyacyl]-N-acetyl-alpha-D-glucosamine + H2O = a UDP-3-O-[(3R)-3-hydroxyacyl]-alpha-D-glucosamine + acetate. Its pathway is glycolipid biosynthesis; lipid IV(A) biosynthesis; lipid IV(A) from (3R)-3-hydroxytetradecanoyl-[acyl-carrier-protein] and UDP-N-acetyl-alpha-D-glucosamine: step 2/6. Catalyzes the hydrolysis of UDP-3-O-myristoyl-N-acetylglucosamine to form UDP-3-O-myristoylglucosamine and acetate, the committed step in lipid A biosynthesis. In Blochmanniella pennsylvanica (strain BPEN), this protein is UDP-3-O-acyl-N-acetylglucosamine deacetylase.